The primary structure comprises 439 residues: Methylenetetrahydrofolate--tRNA-(uracil-5-)-methyltransferase TrmFO (439 aa).

Glycine 7–glycine 12 serves as a coordination point for FAD.

The protein belongs to the MnmG family. TrmFO subfamily. Requires FAD as cofactor.

The protein resides in the cytoplasm. It catalyses the reaction uridine(54) in tRNA + (6R)-5,10-methylene-5,6,7,8-tetrahydrofolate + NADH + H(+) = 5-methyluridine(54) in tRNA + (6S)-5,6,7,8-tetrahydrofolate + NAD(+). The catalysed reaction is uridine(54) in tRNA + (6R)-5,10-methylene-5,6,7,8-tetrahydrofolate + NADPH + H(+) = 5-methyluridine(54) in tRNA + (6S)-5,6,7,8-tetrahydrofolate + NADP(+). In terms of biological role, catalyzes the folate-dependent formation of 5-methyl-uridine at position 54 (M-5-U54) in all tRNAs. This is Methylenetetrahydrofolate--tRNA-(uracil-5-)-methyltransferase TrmFO from Heliobacterium modesticaldum (strain ATCC 51547 / Ice1).